We begin with the raw amino-acid sequence, 220 residues long: Probable septum site-determining protein MinC (220 aa).

It belongs to the MinC family. As to quaternary structure, interacts with MinD and FtsZ.

Functionally, cell division inhibitor that blocks the formation of polar Z ring septums. Rapidly oscillates between the poles of the cell to destabilize FtsZ filaments that have formed before they mature into polar Z rings. Prevents FtsZ polymerization. This is Probable septum site-determining protein MinC from Prochlorococcus marinus subsp. pastoris (strain CCMP1986 / NIES-2087 / MED4).